Here is a 227-residue protein sequence, read N- to C-terminus: Protein lin-28 (227 aa).

The span at 1 to 17 (MSTVVSEGRNDGNNRYS) shows a compositional bias: polar residues. The tract at residues 1–27 (MSTVVSEGRNDGNNRYSPQDEVEDRLP) is disordered. Positions 52–120 (RYFGSCKWFN…GREAYAVSGE (69 aa)) constitute a CSD domain. 2 CCHC-type zinc fingers span residues 143-160 (RCFR…SCPN) and 166-183 (KVCY…ICPE). The Zn(2+) site is built by C144, C147, H153, C158, C168, C171, H176, and C181. The interval 181-227 (CPERRRKHRPEQVAAEEAEAARMAAEKSSPTTSDDDIREKNSNSSDE) is disordered.

The protein belongs to the lin-28 family. As to quaternary structure, component of a complex at least containing lep-2, lin-28 and the long non-coding RNA lep-5, which mediates the degradation of lin-28. Cleavage by caspase ced-3 during larval development probably induces lin-28 degradation.

It is found in the cytoplasm. In terms of biological role, heterochronic protein which controls the choice of stage specific cell fates. Regulates the timing of the second larval stage events (L2 events) in the hypodermis. May negatively regulate the larval to adult transition via the suppression of the microRNA (miRNA) let-7 during L3. Through this regulatory role, controls the timing of the sexual maturation of the nervous system. Also has a role in the fox-1-sex-1-mediated determination of sexual fate. Plays a role in governing the developmental timing of male tail tip morphogenesis. Plays a role in controlling the seam cell number during larval stages. Plays a role in vulval development. In Caenorhabditis elegans, this protein is Protein lin-28.